Consider the following 272-residue polypeptide: Orotidine 5'-phosphate decarboxylase (272 aa).

The active-site Proton donor is K95.

The protein belongs to the OMP decarboxylase family. Type 2 subfamily.

The catalysed reaction is orotidine 5'-phosphate + H(+) = UMP + CO2. It functions in the pathway pyrimidine metabolism; UMP biosynthesis via de novo pathway; UMP from orotate: step 2/2. This Bordetella petrii (strain ATCC BAA-461 / DSM 12804 / CCUG 43448) protein is Orotidine 5'-phosphate decarboxylase.